The sequence spans 193 residues: uncharacterized protein (193 aa).

This is an uncharacterized protein from Aquifex aeolicus (strain VF5).